The primary structure comprises 114 residues: Transmembrane protein 256 homolog (114 aa).

The first 25 residues, 1 to 25 (MAAGRVWGRLGAVSGALAVTAGAYG), serve as a signal peptide directing secretion. The Extracellular portion of the chain corresponds to 26 to 64 (AHGFRRSDRDEYLKELFETGNRYHFLHSLALLAVPHCRR). The chain crosses the membrane as a helical span at residues 65–85 (PLLAGSLLTSGIVLFSGTFYY). The Cytoplasmic portion of the chain corresponds to 86-93 (QALSGDPT). The helical transmembrane segment at 94–114 (LTKAAPYGGTLLILGWAAMAL) threads the bilayer.

It belongs to the TMEM256 family.

The protein localises to the cell membrane. This Bufo gargarizans (Asian toad) protein is Transmembrane protein 256 homolog.